The following is a 323-amino-acid chain: Serine acetyltransferase 2 (323 aa).

Residues 302–323 (AQSNGPSLSAGDTEKGHTNSTS) form a disordered region. Residues 313 to 323 (DTEKGHTNSTS) are compositionally biased toward basic and acidic residues.

It belongs to the transferase hexapeptide repeat family. Homomultimer. Ubiquitously expressed at low levels. Localized in vascular tissues, particularly in phloem.

The protein resides in the cytoplasm. The catalysed reaction is L-serine + acetyl-CoA = O-acetyl-L-serine + CoA. It functions in the pathway amino-acid biosynthesis; L-cysteine biosynthesis; L-cysteine from L-serine: step 1/2. This is Serine acetyltransferase 2 from Arabidopsis thaliana (Mouse-ear cress).